The following is a 147-amino-acid chain: Small ribosomal subunit protein uS5 (147 aa).

The S5 DRBM domain maps to 9–72 (FEEVIVDIGR…DDAFKNIIHV (64 aa)).

It belongs to the universal ribosomal protein uS5 family. As to quaternary structure, part of the 30S ribosomal subunit. Contacts proteins S4 and S8.

In terms of biological role, with S4 and S12 plays an important role in translational accuracy. Functionally, located at the back of the 30S subunit body where it stabilizes the conformation of the head with respect to the body. This is Small ribosomal subunit protein uS5 from Campylobacter curvus (strain 525.92).